The sequence spans 237 residues: Protein GrpE (237 aa).

Disordered regions lie at residues 27-51 (EDRE…LSET) and 202-237 (AVSS…PQHS). 2 stretches are compositionally biased toward low complexity: residues 33–45 (ASTS…AEAS) and 204–213 (SSGSPTSEPS). Polar residues predominate over residues 227 to 237 (TPASPQNPQHS).

The protein belongs to the GrpE family. Homodimer.

The protein resides in the cytoplasm. Functionally, participates actively in the response to hyperosmotic and heat shock by preventing the aggregation of stress-denatured proteins, in association with DnaK and GrpE. It is the nucleotide exchange factor for DnaK and may function as a thermosensor. Unfolded proteins bind initially to DnaJ; upon interaction with the DnaJ-bound protein, DnaK hydrolyzes its bound ATP, resulting in the formation of a stable complex. GrpE releases ADP from DnaK; ATP binding to DnaK triggers the release of the substrate protein, thus completing the reaction cycle. Several rounds of ATP-dependent interactions between DnaJ, DnaK and GrpE are required for fully efficient folding. This Synechococcus sp. (strain JA-3-3Ab) (Cyanobacteria bacterium Yellowstone A-Prime) protein is Protein GrpE.